Here is a 111-residue protein sequence, read N- to C-terminus: Ribonuclease P protein component 1 (111 aa).

This sequence belongs to the eukaryotic/archaeal RNase P protein component 1 family. Consists of a catalytic RNA component and at least 4-5 protein subunits.

Its subcellular location is the cytoplasm. The catalysed reaction is Endonucleolytic cleavage of RNA, removing 5'-extranucleotides from tRNA precursor.. In terms of biological role, part of ribonuclease P, a protein complex that generates mature tRNA molecules by cleaving their 5'-ends. The polypeptide is Ribonuclease P protein component 1 (Hyperthermus butylicus (strain DSM 5456 / JCM 9403 / PLM1-5)).